The following is a 316-amino-acid chain: Transaldolase (316 aa).

Residue K132 is the Schiff-base intermediate with substrate of the active site.

Belongs to the transaldolase family. Type 1 subfamily. In terms of assembly, homodimer.

The protein localises to the cytoplasm. It catalyses the reaction D-sedoheptulose 7-phosphate + D-glyceraldehyde 3-phosphate = D-erythrose 4-phosphate + beta-D-fructose 6-phosphate. It functions in the pathway carbohydrate degradation; pentose phosphate pathway; D-glyceraldehyde 3-phosphate and beta-D-fructose 6-phosphate from D-ribose 5-phosphate and D-xylulose 5-phosphate (non-oxidative stage): step 2/3. Transaldolase is important for the balance of metabolites in the pentose-phosphate pathway. This Vibrio vulnificus (strain CMCP6) protein is Transaldolase.